Reading from the N-terminus, the 393-residue chain is Protein TsgA (393 aa).

The next 12 helical transmembrane spans lie at 11-31 (WISF…GMVM), 51-71 (FLNA…EIIP), 78-98 (FGFI…SLAL), 101-121 (AAMF…TFLI), 134-154 (LLFT…VAAF), 162-182 (WYWV…LTFG), 206-226 (IGVL…LGFI), 245-265 (ALVS…SFIL), 273-293 (ILTV…TGTQ), 298-318 (WFIL…ITLG), 332-352 (FILT…GPIV), and 361-381 (LLTA…LGFV).

This sequence belongs to the major facilitator superfamily. TsgA family.

The protein resides in the cell inner membrane. The chain is Protein TsgA from Salmonella paratyphi B (strain ATCC BAA-1250 / SPB7).